Reading from the N-terminus, the 309-residue chain is Small ribosomal subunit biogenesis GTPase RsgA (309 aa).

Positions 88-247 (KNLITRPPVA…IADTPGFNKP (160 aa)) constitute a CP-type G domain. GTP contacts are provided by residues 137–140 (TKRD) and 189–197 (GPSGVGKSS). The Zn(2+) site is built by Cys-272, Cys-277, His-279, and Cys-285.

Belongs to the TRAFAC class YlqF/YawG GTPase family. RsgA subfamily. In terms of assembly, monomer. Associates with 30S ribosomal subunit, binds 16S rRNA. The cofactor is Zn(2+).

Its subcellular location is the cytoplasm. Its function is as follows. One of several proteins that assist in the late maturation steps of the functional core of the 30S ribosomal subunit. Helps release RbfA from mature subunits. May play a role in the assembly of ribosomal proteins into the subunit. Circularly permuted GTPase that catalyzes slow GTP hydrolysis, GTPase activity is stimulated by the 30S ribosomal subunit. This is Small ribosomal subunit biogenesis GTPase RsgA from Prochlorococcus marinus (strain SARG / CCMP1375 / SS120).